The primary structure comprises 389 residues: tRNA-specific 2-thiouridylase MnmA (389 aa).

Residues 35–42 and methionine 61 each bind ATP; that span reads GMSGGVDS. An interaction with target base in tRNA region spans residues 121 to 123; it reads NPD. Cysteine 126 serves as the catalytic Nucleophile. Cysteines 126 and 223 form a disulfide. Glycine 151 contributes to the ATP binding site. An interaction with tRNA region spans residues 173–175; sequence KDQ. The Cysteine persulfide intermediate role is filled by cysteine 223. The interval 335–336 is interaction with tRNA; the sequence is RY.

It belongs to the MnmA/TRMU family.

It localises to the cytoplasm. The catalysed reaction is S-sulfanyl-L-cysteinyl-[protein] + uridine(34) in tRNA + AH2 + ATP = 2-thiouridine(34) in tRNA + L-cysteinyl-[protein] + A + AMP + diphosphate + H(+). Catalyzes the 2-thiolation of uridine at the wobble position (U34) of tRNA, leading to the formation of s(2)U34. The polypeptide is tRNA-specific 2-thiouridylase MnmA (Actinobacillus succinogenes (strain ATCC 55618 / DSM 22257 / CCUG 43843 / 130Z)).